We begin with the raw amino-acid sequence, 359 residues long: Probable tyrosine-protein phosphatase pir-2 (359 aa).

The Tyrosine-protein phosphatase domain occupies 16–191; that stretch reads QPVGNVIPRT…AKDKRDKQVD (176 aa). Cys-131 functions as the Phosphocysteine intermediate in the catalytic mechanism. Residues 184–199 are compositionally biased toward basic and acidic residues; the sequence is DKRDKQVDSDSDSSER. 3 disordered regions span residues 184–211, 234–259, and 274–328; these read DKRDKQVDSDSDSSERQRKKKNKRKHRE, SVSGTDYQNSPNGVSVDPGQPQPHHW, and PVAN…RNRM. Residues 200–210 show a composition bias toward basic residues; the sequence is QRKKKNKRKHR. Positions 234 to 246 are enriched in polar residues; that stretch reads SVSGTDYQNSPNG. Residues 290 to 309 show a composition bias toward acidic residues; the sequence is PQEEEEFEEDFEEIEEETET. A compositionally biased stretch (basic residues) spans 319–328; sequence SKRRARRNRM.

This sequence belongs to the protein-tyrosine phosphatase family. Non-receptor class CDC14 subfamily.

The enzyme catalyses O-phospho-L-tyrosyl-[protein] + H2O = L-tyrosyl-[protein] + phosphate. The sequence is that of Probable tyrosine-protein phosphatase pir-2 from Caenorhabditis elegans.